Here is a 336-residue protein sequence, read N- to C-terminus: Holliday junction branch migration complex subunit RuvB (336 aa).

The segment at 1–182 (MKERIVNLET…FGMSFRMQFY (182 aa)) is large ATPase domain (RuvB-L). ATP-binding positions include leucine 21, arginine 22, glycine 63, lysine 66, threonine 67, serine 68, 129 to 131 (EDF), arginine 172, tyrosine 182, and arginine 219. Threonine 67 is a Mg(2+) binding site. The tract at residues 183–253 (SPSELALIIK…ITLHALNELG (71 aa)) is small ATPAse domain (RuvB-S). Residues 256–336 (ELGFDEADLA…IPTLKSQSLF (81 aa)) are head domain (RuvB-H). 2 residues coordinate DNA: arginine 310 and arginine 315.

Belongs to the RuvB family. Homohexamer. Forms an RuvA(8)-RuvB(12)-Holliday junction (HJ) complex. HJ DNA is sandwiched between 2 RuvA tetramers; dsDNA enters through RuvA and exits via RuvB. An RuvB hexamer assembles on each DNA strand where it exits the tetramer. Each RuvB hexamer is contacted by two RuvA subunits (via domain III) on 2 adjacent RuvB subunits; this complex drives branch migration. In the full resolvosome a probable DNA-RuvA(4)-RuvB(12)-RuvC(2) complex forms which resolves the HJ.

The protein resides in the cytoplasm. The enzyme catalyses ATP + H2O = ADP + phosphate + H(+). The RuvA-RuvB-RuvC complex processes Holliday junction (HJ) DNA during genetic recombination and DNA repair, while the RuvA-RuvB complex plays an important role in the rescue of blocked DNA replication forks via replication fork reversal (RFR). RuvA specifically binds to HJ cruciform DNA, conferring on it an open structure. The RuvB hexamer acts as an ATP-dependent pump, pulling dsDNA into and through the RuvAB complex. RuvB forms 2 homohexamers on either side of HJ DNA bound by 1 or 2 RuvA tetramers; 4 subunits per hexamer contact DNA at a time. Coordinated motions by a converter formed by DNA-disengaged RuvB subunits stimulates ATP hydrolysis and nucleotide exchange. Immobilization of the converter enables RuvB to convert the ATP-contained energy into a lever motion, pulling 2 nucleotides of DNA out of the RuvA tetramer per ATP hydrolyzed, thus driving DNA branch migration. The RuvB motors rotate together with the DNA substrate, which together with the progressing nucleotide cycle form the mechanistic basis for DNA recombination by continuous HJ branch migration. Branch migration allows RuvC to scan DNA until it finds its consensus sequence, where it cleaves and resolves cruciform DNA. This chain is Holliday junction branch migration complex subunit RuvB, found in Helicobacter acinonychis (strain Sheeba).